The primary structure comprises 277 residues: Caspase-3 (277 aa).

Methionine 1 carries the post-translational modification N-acetylmethionine. 2 propeptides span residues 1 to 9 (MENTENSVD) and 10 to 28 (SKSI…QSMD). The segment covering 1–10 (MENTENSVDS) has biased composition (polar residues). A disordered region spans residues 1-20 (MENTENSVDSKSIKNLEPKI). Lysine 11 is modified (N6-acetyllysine). Positions 11-20 (KSIKNLEPKI) are enriched in basic and acidic residues. The residue at position 26 (serine 26) is a Phosphoserine. Active-site residues include histidine 121 and cysteine 163. Cysteine 163 carries the S-nitrosocysteine; in inhibited form modification.

Belongs to the peptidase C14A family. Heterotetramer that consists of two anti-parallel arranged heterodimers, each one formed by a 17 kDa (p17) and a 12 kDa (p12) subunit. Interacts with BIRC6/bruce. Cleavage by granzyme B, caspase-6, caspase-8 and caspase-10 generates the two active subunits. Additional processing of the propeptides is likely due to the autocatalytic activity of the activated protease. Active heterodimers between the small subunit of caspase-7 protease and the large subunit of caspase-3 also occur and vice versa. In terms of processing, S-nitrosylated on its catalytic site cysteine in unstimulated cell lines and denitrosylated upon activation of the Fas apoptotic pathway, associated with an increase in intracellular caspase activity. Fas therefore activates caspase-3 not only by inducing the cleavage of the caspase zymogen to its active subunits, but also by stimulating the denitrosylation of its active site thiol. Post-translationally, ubiquitinated by BIRC6; this activity is inhibited by DIABLO/SMAC.

It is found in the cytoplasm. The enzyme catalyses Strict requirement for an Asp residue at positions P1 and P4. It has a preferred cleavage sequence of Asp-Xaa-Xaa-Asp-|- with a hydrophobic amino-acid residue at P2 and a hydrophilic amino-acid residue at P3, although Val or Ala are also accepted at this position.. Its activity is regulated as follows. Inhibited by BIRC6; following inhibition of BIRC6-caspase binding by DIABLO/SMAC, BIRC6 is subjected to caspase cleavage, leading to an increase in active caspases. Functionally, involved in the activation cascade of caspases responsible for apoptosis execution. At the onset of apoptosis, it proteolytically cleaves poly(ADP-ribose) polymerase PARP1 at a '216-Asp-|-Gly-217' bond. Cleaves and activates sterol regulatory element binding proteins (SREBPs) between the basic helix-loop-helix leucine zipper domain and the membrane attachment domain. Cleaves and activates caspase-6, -7 and -9 (CASP6, CASP7 and CASP9, respectively). Cleaves and inactivates interleukin-18 (IL18). Triggers cell adhesion in sympathetic neurons through RET cleavage. Cleaves IL-1 beta between an Asp and an Ala, releasing the mature cytokine which is involved in a variety of inflammatory processes. Cleaves and inhibits serine/threonine-protein kinase AKT1 in response to oxidative stress. Acts as an inhibitor of type I interferon production during virus-induced apoptosis by mediating cleavage of antiviral proteins CGAS, IRF3 and MAVS, thereby preventing cytokine overproduction. Also involved in pyroptosis by mediating cleavage and activation of gasdermin-E (GSDME). Cleaves XRCC4 and phospholipid scramblase proteins XKR4, XKR8 and XKR9, leading to promote phosphatidylserine exposure on apoptotic cell surface. Cleaves BIRC6 following inhibition of BIRC6-caspase binding by DIABLO/SMAC. This chain is Caspase-3 (CASP3), found in Pan troglodytes (Chimpanzee).